A 573-amino-acid polypeptide reads, in one-letter code: PCNA-interacting partner (573 aa).

The disordered stretch occupies residues T492–K532. Residues D515–E527 show a composition bias toward polar residues.

Belongs to the PARI family.

The protein localises to the cytoplasm. The protein resides in the nucleus. Functionally, required to suppress inappropriate homologous recombination, thereby playing a central role DNA repair and in the maintenance of genomic stability. This Xenopus tropicalis (Western clawed frog) protein is PCNA-interacting partner (parpbp).